Here is a 208-residue protein sequence, read N- to C-terminus: Inactive ribonuclease-like protein 10 (208 aa).

The signal sequence occupies residues 1–24; it reads MKVTLVHLLFMMLLLLLGLGLGLG. 2 N-linked (GlcNAc...) asparagine glycosylation sites follow: Asn125 and Asn147.

Belongs to the pancreatic ribonuclease family. Post-translationally, the N-terminus is blocked. Glycosylated. Male-specific expression in proximal caput of the epididymis (at protein level).

The protein resides in the secreted. Functionally, secreted proximal epididymal protein required for post-testicular sperm maturation and male fertility. May be involved in sperm adhesion to the egg zona pellucida. Does not have ribonuclease activity. The polypeptide is Inactive ribonuclease-like protein 10 (Rnase10) (Mus musculus (Mouse)).